Reading from the N-terminus, the 96-residue chain is Small ribosomal subunit protein bS18c (96 aa).

Belongs to the bacterial ribosomal protein bS18 family. In terms of assembly, part of the 30S ribosomal subunit.

The protein resides in the plastid. Its subcellular location is the chloroplast. In Pinus thunbergii (Japanese black pine), this protein is Small ribosomal subunit protein bS18c (rps18).